A 529-amino-acid chain; its full sequence is Peptide chain release factor 3 (529 aa).

The region spanning 11 to 280 (NSRRTFAIIS…AFINWAPEPK (270 aa)) is the tr-type G domain. GTP-binding positions include 20–27 (SHPDAGKT), 88–92 (DTPGH), and 142–145 (NKMD).

It belongs to the TRAFAC class translation factor GTPase superfamily. Classic translation factor GTPase family. PrfC subfamily.

It localises to the cytoplasm. Its function is as follows. Increases the formation of ribosomal termination complexes and stimulates activities of RF-1 and RF-2. It binds guanine nucleotides and has strong preference for UGA stop codons. It may interact directly with the ribosome. The stimulation of RF-1 and RF-2 is significantly reduced by GTP and GDP, but not by GMP. The chain is Peptide chain release factor 3 from Acinetobacter baylyi (strain ATCC 33305 / BD413 / ADP1).